The following is a 145-amino-acid chain: uncharacterized protein (145 aa).

Belongs to the asfivirus K145R family.

The protein resides in the virion. This is an uncharacterized protein from African swine fever virus (isolate Tick/South Africa/Pretoriuskop Pr4/1996) (ASFV).